The following is a 383-amino-acid chain: Cobalt-precorrin-5B C(1)-methyltransferase (383 aa).

The protein belongs to the CbiD family.

It catalyses the reaction Co-precorrin-5B + S-adenosyl-L-methionine = Co-precorrin-6A + S-adenosyl-L-homocysteine. It functions in the pathway cofactor biosynthesis; adenosylcobalamin biosynthesis; cob(II)yrinate a,c-diamide from sirohydrochlorin (anaerobic route): step 6/10. Its function is as follows. Catalyzes the methylation of C-1 in cobalt-precorrin-5B to form cobalt-precorrin-6A. The polypeptide is Cobalt-precorrin-5B C(1)-methyltransferase (Prochlorococcus marinus (strain MIT 9313)).